The primary structure comprises 431 residues: Fibrinogen C domain-containing protein 1 (431 aa).

The Cytoplasmic portion of the chain corresponds to 1–3 (MLC). Residues 4 to 24 (TVLLALAVLLAVAVTGAVLFL) traverse the membrane as a helical; Signal-anchor for type II membrane protein segment. The Extracellular segment spans residues 25-431 (NHTHTPGTAP…MKIRPVREDR (407 aa)). The region spanning 205–428 (CATGSRPRDC…FSEMKIRPVR (224 aa)) is the Fibrinogen C-terminal domain. Residues Cys214 and Cys243 are joined by a disulfide bond. An N-linked (GlcNAc...) asparagine glycan is attached at Asn310. Ca(2+) contacts are provided by Asp363 and Asp365. Cys371 and Cys384 are disulfide-bonded.

As to quaternary structure, homotetramer; disulfide-linked.

The protein resides in the membrane. Functionally, acetyl group-binding receptor which shows a high-affinity and calcium-dependent binding to acetylated structures such as chitin, some N-acetylated carbohydrates, and amino acids, but not to their non-acetylated counterparts. Can facilitate the endocytosis of acetylated components. In Macaca fascicularis (Crab-eating macaque), this protein is Fibrinogen C domain-containing protein 1 (FIBCD1).